We begin with the raw amino-acid sequence, 336 residues long: 4-aminobenzoate N-oxygenase (336 aa).

Residue Y93 coordinates 4-nitrobenzoate. Fe cation contacts are provided by E101, E136, H139, and E196. N200 provides a ligand contact to 4-nitrobenzoate. Fe cation is bound by residues H223, E227, and H230.

The protein belongs to the AurF N-oxygenase family. As to quaternary structure, homodimer. It depends on Fe(2+) as a cofactor.

It catalyses the reaction 4-aminobenzoate + AH2 + 2 O2 = 4-nitrobenzoate + A + 2 H2O. It participates in antibiotic biosynthesis. Involved in the biosynthesis of the polyketide antibiotic aureothin. Catalyzes the oxidation of p-aminobenzoate (pABA) to p-nitrobenzoate (pNBA), an unusual polyketide synthase starter unit. Reaction mechanism involves the generation of a peroxodiiron(III/III) intermediate, which effects the initial oxidation of p-aminobenzoate to p-hydroxylaminobenzoate (Ar-NHOH). Ar-NHOH is then probably directly converted to the fully oxidized p-nitrobenzoate via a four-electron N-oxidation, bypassing the formation of a nitroso compound. In Streptomyces thioluteus, this protein is 4-aminobenzoate N-oxygenase.